Here is a 156-residue protein sequence, read N- to C-terminus: ATP synthase subunit b (156 aa).

The helical transmembrane segment at 7-27 (LIGQLIAFAIFVWFCMKYVWP) threads the bilayer.

It belongs to the ATPase B chain family. As to quaternary structure, F-type ATPases have 2 components, F(1) - the catalytic core - and F(0) - the membrane proton channel. F(1) has five subunits: alpha(3), beta(3), gamma(1), delta(1), epsilon(1). F(0) has three main subunits: a(1), b(2) and c(10-14). The alpha and beta chains form an alternating ring which encloses part of the gamma chain. F(1) is attached to F(0) by a central stalk formed by the gamma and epsilon chains, while a peripheral stalk is formed by the delta and b chains.

The protein localises to the cell inner membrane. F(1)F(0) ATP synthase produces ATP from ADP in the presence of a proton or sodium gradient. F-type ATPases consist of two structural domains, F(1) containing the extramembraneous catalytic core and F(0) containing the membrane proton channel, linked together by a central stalk and a peripheral stalk. During catalysis, ATP synthesis in the catalytic domain of F(1) is coupled via a rotary mechanism of the central stalk subunits to proton translocation. In terms of biological role, component of the F(0) channel, it forms part of the peripheral stalk, linking F(1) to F(0). The protein is ATP synthase subunit b of Histophilus somni (strain 129Pt) (Haemophilus somnus).